Consider the following 704-residue polypeptide: Neutral ceramidase (704 aa).

The N-terminal stretch at 1 to 23 (MAISKIAFLALIALSGLCGLASA) is a signal peptide. Residue N230 is glycosylated (N-linked (GlcNAc...) asparagine). S276 (nucleophile) is an active-site residue. Residues N362, N550, and N598 are each glycosylated (N-linked (GlcNAc...) asparagine).

It belongs to the neutral ceramidase family. Post-translationally, N-glycosylated.

It is found in the secreted. It catalyses the reaction an N-acylsphing-4-enine + H2O = sphing-4-enine + a fatty acid. Functionally, hydrolyzes the sphingolipid ceramide into sphingosine and free fatty acid at an optimal pH of 6.5-7.5. Acts as a key regulator of sphingolipid signaling metabolites by generating sphingosine at the cell surface. This chain is Neutral ceramidase (CDase), found in Drosophila pseudoobscura pseudoobscura (Fruit fly).